Here is a 1821-residue protein sequence, read N- to C-terminus: Latent-transforming growth factor beta-binding protein 2 (1821 aa).

An N-terminal signal peptide occupies residues 1–35; sequence MRPRTKARSPGRALRNPWRGFLPLTLALFVGAGHA. 2 disordered regions span residues 38 to 58 and 81 to 165; these read DPVG…RPGG and GLQP…RLTG. Residues 94-115 form a heparin-binding region; it reads SPRRPTEAEARRPSRAQQSRRV. 2 stretches are compositionally biased toward low complexity: residues 108–120 and 129–145; these read RAQQ…PPAQ and QQQP…LPRL. N-linked (GlcNAc...) asparagine glycosylation is present at Asn-181. The EGF-like 1 domain occupies 187 to 219; sequence IKPVCEPPCQNRGSCSRPQLCVCRSGFRGARCE. Cystine bridges form between Cys-191–Cys-201, Cys-195–Cys-207, and Cys-209–Cys-218. The tract at residues 229–339 is disordered; that stretch reads PQNSRLAPRR…AVPLEHPSSP (111 aa). The segment at 232-249 is heparin-binding; sequence SRLAPRRWAERSPNLRRS. Residues 262–274 are compositionally biased toward pro residues; that stretch reads PPAPQSPPAPQSP. Composition is skewed to polar residues over residues 280–292 and 304–314; these read SGLS…QQHV and ATASSQLSSNA. A glycan (N-linked (GlcNAc...) asparagine) is linked at Asn-343. 344–354 contacts heparin; that stretch reads LTEKIKKIKIV. The short motif at 375–377 is the Cell attachment site element; sequence RGD. The EGF-like 2 domain occupies 396-428; that stretch reads RIYFCQIPCLNGGRCIGRDECWCPANSTGKFCH. Cystine bridges form between Cys-400-Cys-410, Cys-404-Cys-416, and Cys-418-Cys-427. The N-linked (GlcNAc...) asparagine glycan is linked to Asn-421. The residue at position 506 (Ser-506) is a Phosphoserine. Positions 510 to 544 are disordered; the sequence is RPPPWLPASPGHSLWDSNNIPARSGEPPRPLPPAA. The TB 1 domain maps to 552–604; sequence GRCYLNTVNGQCANPLLELTTQEDCCGSVGAFWGVTLCAPCPPRPASPVIENG. Cystine bridges form between Cys-554–Cys-576, Cys-563–Cys-589, and Cys-577–Cys-592. Asn-616 carries an N-linked (GlcNAc...) asparagine glycan. The EGF-like 3; calcium-binding domain occupies 622–662; that stretch reads DINECLTLGLCKDAECVNTRGSYLCTCRPGLMLDPSRSRCV. 7 cysteine pairs are disulfide-bonded: Cys-626–Cys-637, Cys-632–Cys-646, Cys-648–Cys-661, Cys-674–Cys-696, Cys-683–Cys-709, Cys-697–Cys-712, and Cys-698–Cys-724. Positions 672-724 constitute a TB 2 domain; sequence GLCYRSLGPGTCTLPLAQRITKQICCCSRVGKAWGSECEKCPLPGTEAFREIC. The segment covering 744-757 has biased composition (basic and acidic residues); it reads AEEEELARPPREQG. A disordered region spans residues 744–772; the sequence is AEEEELARPPREQGQRSSGALPGPAERQP. Asn-811 carries N-linked (GlcNAc...) asparagine glycosylation. Positions 844 to 886 constitute an EGF-like 4 domain; sequence GIDRCAAGATNVCGPGTCVNLPDGYRCVCSPGYQLHPSQAYCT. 49 disulfides stabilise this stretch: Cys-848–Cys-861, Cys-856–Cys-870, Cys-872–Cys-885, Cys-891–Cys-902, Cys-896–Cys-911, Cys-913–Cys-928, Cys-934–Cys-945, Cys-940–Cys-954, Cys-956–Cys-968, Cys-974–Cys-985, Cys-980–Cys-994, Cys-997–Cys-1008, Cys-1014–Cys-1025, Cys-1020–Cys-1034, Cys-1036–Cys-1049, Cys-1055–Cys-1066, Cys-1061–Cys-1075, Cys-1078–Cys-1091, Cys-1097–Cys-1108, Cys-1103–Cys-1117, Cys-1120–Cys-1133, Cys-1139–Cys-1151, Cys-1146–Cys-1160, Cys-1162–Cys-1174, Cys-1180–Cys-1192, Cys-1186–Cys-1201, Cys-1203–Cys-1216, Cys-1222–Cys-1233, Cys-1228–Cys-1242, Cys-1244–Cys-1257, Cys-1263–Cys-1276, Cys-1271–Cys-1285, Cys-1289–Cys-1301, Cys-1307–Cys-1319, Cys-1313–Cys-1328, Cys-1330–Cys-1343, Cys-1349–Cys-1361, Cys-1356–Cys-1370, Cys-1372–Cys-1386, Cys-1413–Cys-1436, Cys-1423–Cys-1448, Cys-1437–Cys-1451, Cys-1438–Cys-1463, Cys-1489–Cys-1502, Cys-1497–Cys-1511, Cys-1513–Cys-1526, Cys-1532–Cys-1542, Cys-1537–Cys-1551, and Cys-1553–Cys-1566. The region spanning 887-929 is the EGF-like 5; calcium-binding domain; that stretch reads DDNECLRDPCKGKGRCINRVGSYSCFCYPGYTLATSGATQECQ. Residues 930-969 enclose the EGF-like 6; calcium-binding domain; it reads DINECEQPGVCSGGQCTNTEGSYHCECDQGYIMVRKGHCQ. In terms of domain architecture, EGF-like 7; calcium-binding spans 970 to 1009; the sequence is DINECRHPGTCPDGRCVNSPGSYTCLACEEGYRGQSGSCV. The EGF-like 8; calcium-binding domain maps to 1010 to 1050; sequence DVNECLTPGVCAHGKCTNLEGSFRCSCEQGYEVTSDEKGCQ. The 42-residue stretch at 1051 to 1092 folds into the EGF-like 9; calcium-binding domain; the sequence is DVDECASRASCPTGLCLNTEGSFACSACENGYWVNEDGTACE. The EGF-like 10; calcium-binding domain maps to 1093-1134; the sequence is DLDECAFPGVCPSGVCTNTAGSFSCKDCDGGYRPSPLGDSCE. In terms of domain architecture, EGF-like 11; calcium-binding spans 1135–1175; it reads DVDECEDPQSSCLGGECKNTVGSYQCLCPQGFQLANGTVCE. Asn-1170 carries N-linked (GlcNAc...) asparagine glycosylation. The 42-residue stretch at 1176–1217 folds into the EGF-like 12; calcium-binding domain; it reads DVNECMGEEHCAPHGECLNSHGSFFCLCAPGFVSAEGGTSCQ. The EGF-like 13; calcium-binding domain maps to 1218 to 1258; sequence DVDECATTDPCVGGHCVNTEGSFNCLCETGFQPSPESGECV. Positions 1259-1302 constitute an EGF-like 14; calcium-binding domain; that stretch reads DIDECEDYGDPVCGTWKCENSPGSYRCVLGCQPGFHMAPNGDCI. Residues 1303-1344 form the EGF-like 15; calcium-binding domain; the sequence is DIDECANDTMCGSHGFCDNTDGSFRCLCDQGFEISPSGWDCV. Asn-1309 carries an N-linked (GlcNAc...) asparagine glycan. The EGF-like 16; calcium-binding domain maps to 1345–1387; the sequence is DVNECELMLAVCGAALCENVEGSFLCLCASDLEEYDAQEGHCR. The region spanning 1411–1463 is the TB 3 domain; that stretch reads MDCYSGQKGHAPCSSVLGRNTTQAECCCTQGASWGDACDLCPSEDSAEFSEIC. Asn-1430 carries N-linked (GlcNAc...) asparagine glycosylation. An EGF-like 17; calcium-binding domain is found at 1485–1527; sequence DADECVIFGPGLCPNGRCLNTVPGYVCLCNPGFHYDASHKKCE. The region spanning 1528 to 1567 is the EGF-like 18; calcium-binding domain; it reads DHDECQDLACENGECVNTEGSFHCFCSPPLTLDLSQQRCM. Asn-1568 carries N-linked (GlcNAc...) asparagine glycosylation. In terms of domain architecture, TB 4 spans 1584-1636; sequence DICWKKVTNDVCSEPLRGHRTTYTECCCQDGEAWSQQCALCPPRSSEVYAQLC. 10 disulfides stabilise this stretch: Cys-1586-Cys-1609, Cys-1595-Cys-1621, Cys-1610-Cys-1624, Cys-1611-Cys-1636, Cys-1737-Cys-1748, Cys-1743-Cys-1757, Cys-1759-Cys-1772, Cys-1778-Cys-1793, Cys-1788-Cys-1802, and Cys-1804-Cys-1817. Residues 1639-1821 form a C-terminal domain region; sequence ARIEAEREAG…AGPPHCTAKE (183 aa). In terms of domain architecture, EGF-like 19; calcium-binding spans 1733–1773; that stretch reads QAEECGILNGCENGRCVRVREGYTCDCFEGFQLDAAHMACV. One can recognise an EGF-like 20; calcium-binding domain in the interval 1774–1818; it reads DVNECDDLNGPAVLCVHGYCENTEGSYRCHCSPGYVAEAGPPHCT.

This sequence belongs to the LTBP family. Forms part of the large latent transforming growth factor beta precursor complex; removal is essential for activation of complex. Interacts with SDC4. Interacts (via C-terminal domain) with FBN1 (via N-terminal domain) in a Ca(+2)-dependent manner. In terms of processing, N-Glycosylated. Post-translationally, contains hydroxylated asparagine residues. Expressed in the aorta (at protein level). Expressed in lung, weakly expressed in heart, placenta, liver and skeletal muscle.

It localises to the secreted. The protein localises to the extracellular space. It is found in the extracellular matrix. Its function is as follows. May play an integral structural role in elastic-fiber architectural organization and/or assembly. The sequence is that of Latent-transforming growth factor beta-binding protein 2 (LTBP2) from Homo sapiens (Human).